The primary structure comprises 405 residues: 4-hydroxy-3-methylbut-2-enyl diphosphate reductase (405 aa).

Cysteine 66 serves as a coordination point for [4Fe-4S] cluster. Histidine 96 contributes to the (2E)-4-hydroxy-3-methylbut-2-enyl diphosphate binding site. Residue histidine 96 participates in dimethylallyl diphosphate binding. Position 96 (histidine 96) interacts with isopentenyl diphosphate. Cysteine 158 serves as a coordination point for [4Fe-4S] cluster. Residue histidine 186 coordinates (2E)-4-hydroxy-3-methylbut-2-enyl diphosphate. Histidine 186 is a binding site for dimethylallyl diphosphate. An isopentenyl diphosphate-binding site is contributed by histidine 186. The Proton donor role is filled by glutamate 188. Threonine 251 serves as a coordination point for (2E)-4-hydroxy-3-methylbut-2-enyl diphosphate. Cysteine 289 is a [4Fe-4S] cluster binding site. (2E)-4-hydroxy-3-methylbut-2-enyl diphosphate is bound by residues serine 318, serine 319, asparagine 320, and serine 380. 4 residues coordinate dimethylallyl diphosphate: serine 318, serine 319, asparagine 320, and serine 380. Serine 318, serine 319, asparagine 320, and serine 380 together coordinate isopentenyl diphosphate.

This sequence belongs to the IspH family. [4Fe-4S] cluster serves as cofactor.

The catalysed reaction is isopentenyl diphosphate + 2 oxidized [2Fe-2S]-[ferredoxin] + H2O = (2E)-4-hydroxy-3-methylbut-2-enyl diphosphate + 2 reduced [2Fe-2S]-[ferredoxin] + 2 H(+). It catalyses the reaction dimethylallyl diphosphate + 2 oxidized [2Fe-2S]-[ferredoxin] + H2O = (2E)-4-hydroxy-3-methylbut-2-enyl diphosphate + 2 reduced [2Fe-2S]-[ferredoxin] + 2 H(+). Its pathway is isoprenoid biosynthesis; dimethylallyl diphosphate biosynthesis; dimethylallyl diphosphate from (2E)-4-hydroxy-3-methylbutenyl diphosphate: step 1/1. It participates in isoprenoid biosynthesis; isopentenyl diphosphate biosynthesis via DXP pathway; isopentenyl diphosphate from 1-deoxy-D-xylulose 5-phosphate: step 6/6. In terms of biological role, catalyzes the conversion of 1-hydroxy-2-methyl-2-(E)-butenyl 4-diphosphate (HMBPP) into a mixture of isopentenyl diphosphate (IPP) and dimethylallyl diphosphate (DMAPP). Acts in the terminal step of the DOXP/MEP pathway for isoprenoid precursor biosynthesis. The polypeptide is 4-hydroxy-3-methylbut-2-enyl diphosphate reductase (Cyanothece sp. (strain PCC 7425 / ATCC 29141)).